We begin with the raw amino-acid sequence, 249 residues long: Probable transcriptional regulatory protein FN1661 (249 aa).

Positions 1 to 10 (MSGHSKWNNI) are enriched in polar residues. Residues 1–20 (MSGHSKWNNIQHRKGAQDKK) form a disordered region.

It belongs to the TACO1 family.

Its subcellular location is the cytoplasm. This Fusobacterium nucleatum subsp. nucleatum (strain ATCC 25586 / DSM 15643 / BCRC 10681 / CIP 101130 / JCM 8532 / KCTC 2640 / LMG 13131 / VPI 4355) protein is Probable transcriptional regulatory protein FN1661.